The sequence spans 491 residues: Interferon regulatory factor 3 (491 aa).

The IRF tryptophan pentad repeat DNA-binding region spans 12–116; it reads KLRFGPWLLN…DPHKVYAVAS (105 aa).

Belongs to the IRF family. In terms of tissue distribution, widely expressed with higher expression in lung, spleen and intestine.

The protein resides in the cytoplasm. It is found in the nucleus. Its function is as follows. Key transcriptional regulator of type I interferon (IFN)-dependent immune responses which plays a critical role in the innate immune response against DNA and RNA viruses. Regulates the transcription of type I IFN genes (IFN-alpha and IFN-beta) and IFN-stimulated genes (ISG) by binding to an interferon-stimulated response element (ISRE) in their promoters. May activate transcription by complex formation with other transcriptional factors, possibly members of the STAT family. Binds specifically to the IFN-stimulated response element (ISRE) but not to the IRF-1 binding site PRD-I. This chain is Interferon regulatory factor 3 (IRF3), found in Gallus gallus (Chicken).